The following is a 36-amino-acid chain: Cytochrome b6-f complex subunit 7 (36 aa).

Over 1 to 5 (NAAAE) the chain is Lumenal. Residues 6-28 (IFRIAAVMNGLTLVGVAIGFVLL) form a helical membrane-spanning segment. The Stromal portion of the chain corresponds to 29-36 (RIEATVEE).

This sequence belongs to the PetM family. As to quaternary structure, the 4 large subunits of the cytochrome b6-f complex are cytochrome b6, subunit IV (17 kDa polypeptide, PetD), cytochrome f and the Rieske protein, while the 4 small subunits are PetG, PetL, PetM and PetN. The complex functions as a dimer.

Its subcellular location is the plastid. The protein resides in the chloroplast thylakoid membrane. In terms of biological role, component of the cytochrome b6-f complex, which mediates electron transfer between photosystem II (PSII) and photosystem I (PSI), cyclic electron flow around PSI, and state transitions. In Spinacia oleracea (Spinach), this protein is Cytochrome b6-f complex subunit 7.